The primary structure comprises 766 residues: Leucine-rich repeat and fibronectin type III domain-containing protein 1 (766 aa).

Positions 1–31 (MAPGPFSSGLLSPPPAALPFLLLLWAGASRG) are cleaved as a signal peptide. Residues 32–65 (QPCPGRCICQNVAPTLTMLCAKTGLLFVPPAIDR) form the LRRNT domain. Topologically, residues 32 to 536 (QPCPGRCICQ…LRAHFLGGTM (505 aa)) are extracellular. 7 LRR repeats span residues 66–87 (RVVE…DFAN), 90–111 (SLVH…AFAD), 114–135 (ALRA…QLRG), 138–159 (NLRH…AFDA), 163–184 (TVED…AVGQ), 187–208 (NLNT…TFVQ), and 211–232 (KLVR…GLFL). Asn-87 is a glycosylation site (N-linked (GlcNAc...) asparagine). In terms of domain architecture, LRRCT spans 252–298 (NPLHCNCELLWLRRLTREDDLETCATPEHLTDRYFWSIPEEEFLCEP). The Ig-like domain maps to 299-386 (PLITRQAGGR…GEATAPVEVC (88 aa)). A disulfide bridge links Cys-321 with Cys-370. Asn-343 carries an N-linked (GlcNAc...) asparagine glycan. Residues 397 to 422 (PAAPPPLTEPGSSDIATPGRPGANDS) form a disordered region. The 97-residue stretch at 424–520 (TERRLVAAEL…GCVQFTTAGD (97 aa)) folds into the Fibronectin type-III domain. Residues 537-557 (IIAIGGVIVASVLVFIVLLMI) traverse the membrane as a helical segment. At 558–766 (RYKVYGDGDS…STEWMLESTV (209 aa)) the chain is on the cytoplasmic side. Disordered stretches follow at residues 568–601 (RRIK…PPAP) and 646–742 (CLLP…GEDG). Ser-713 is modified (phosphoserine). The segment covering 714-727 (YPRRARRTKRHRST) has biased composition (basic residues).

This sequence belongs to the LRFN family. As to quaternary structure, forms heteromeric complexes with LRFN2, LRFN4 and LRFN5; binding to LRFN2 and LRFN5 may be weaker than that to LRFN4. Also interacts with LRFN3. Forms homomeric complexes, but not across cell junctions. Interacts with DLG1, DLG2 and DLG4, but not with MAGI2, not CASK. Interacts with DLG3. Interacts with 2 AMPA receptor subunits GRIA1 and GRIA2 and NMDA receptor subunit GRIN1. In terms of processing, glycosylated. Mainly expressed in brain (at protein level) and testis. In brain, found in cerebral cortex (including pyramidal neurons), hippocampus (including CA3 and CA1 neurons), dentate gyrus, cerebellum (including Purkinje neurons) (at protein level) (at protein level). Also expressed in the olfactory bulb.

It is found in the membrane. The protein localises to the synapse. The protein resides in the postsynaptic density membrane. Promotes neurite outgrowth in hippocampal neurons. Involved in the regulation of the differentiation and maintenance of excitatory synapses. Induces the clustering of excitatory postsynaptic proteins, including DLG4, DLGAP1, GRIA1 and GRIN1. The chain is Leucine-rich repeat and fibronectin type III domain-containing protein 1 (Lrfn1) from Rattus norvegicus (Rat).